Consider the following 219-residue polypeptide: Large ribosomal subunit protein uL3 (219 aa).

The span at 133–145 (GRASHGNSRSHNV) shows a compositional bias: polar residues. Residues 133 to 153 (GRASHGNSRSHNVPGSIGMAQ) form a disordered region. Gln-153 bears the N5-methylglutamine mark.

It belongs to the universal ribosomal protein uL3 family. As to quaternary structure, part of the 50S ribosomal subunit. Forms a cluster with proteins L14 and L19. Methylated by PrmB.

In terms of biological role, one of the primary rRNA binding proteins, it binds directly near the 3'-end of the 23S rRNA, where it nucleates assembly of the 50S subunit. The protein is Large ribosomal subunit protein uL3 of Paraburkholderia phymatum (strain DSM 17167 / CIP 108236 / LMG 21445 / STM815) (Burkholderia phymatum).